A 144-amino-acid polypeptide reads, in one-letter code: Transcriptional regulator SlyA (144 aa).

The HTH marR-type domain occupies 2 to 135 (ESPLGSDLAR…LITLIAKLEH (134 aa)). Residues 49–72 (QIQLAKAIGIEQPSLVRTLDQLEE) constitute a DNA-binding region (H-T-H motif).

This sequence belongs to the SlyA family. Homodimer.

Functionally, transcription regulator that can specifically activate or repress expression of target genes. This chain is Transcriptional regulator SlyA, found in Shigella boydii serotype 18 (strain CDC 3083-94 / BS512).